The following is a 142-amino-acid chain: Hemoglobin subunit alpha (142 aa).

Ser-1 is subject to N-acetylserine. The region spanning 1-142 (SLSDKDKAVV…LALALSEKYR (142 aa)) is the Globin domain. Residue His-59 participates in O2 binding. His-88 provides a ligand contact to heme b.

The protein belongs to the globin family. Heterotetramer of two alpha chains and two beta chains. Red blood cells.

In terms of biological role, involved in oxygen transport from gills to the various peripheral tissues. This chain is Hemoglobin subunit alpha (hba), found in Carassius auratus (Goldfish).